Reading from the N-terminus, the 338-residue chain is S-adenosylmethionine:tRNA ribosyltransferase-isomerase (338 aa).

This sequence belongs to the QueA family. As to quaternary structure, monomer.

It localises to the cytoplasm. It catalyses the reaction 7-aminomethyl-7-carbaguanosine(34) in tRNA + S-adenosyl-L-methionine = epoxyqueuosine(34) in tRNA + adenine + L-methionine + 2 H(+). It participates in tRNA modification; tRNA-queuosine biosynthesis. Functionally, transfers and isomerizes the ribose moiety from AdoMet to the 7-aminomethyl group of 7-deazaguanine (preQ1-tRNA) to give epoxyqueuosine (oQ-tRNA). The chain is S-adenosylmethionine:tRNA ribosyltransferase-isomerase from Francisella tularensis subsp. tularensis (strain WY96-3418).